Consider the following 103-residue polypeptide: G0/G1 switch protein 2 (103 aa).

In terms of assembly, directly interacts with BCL2; this interaction prevents the formation of the anti-apoptotic BAX-BCL2 complex.

It localises to the mitochondrion. In terms of biological role, promotes apoptosis by binding to BCL2, hence preventing the formation of protective BCL2-BAX heterodimers. The sequence is that of G0/G1 switch protein 2 (G0s2) from Mus musculus (Mouse).